The chain runs to 475 residues: 3-isopropylmalate dehydratase large subunit (475 aa).

Residues Cys-353, Cys-414, and Cys-417 each contribute to the [4Fe-4S] cluster site.

The protein belongs to the aconitase/IPM isomerase family. LeuC type 1 subfamily. As to quaternary structure, heterodimer of LeuC and LeuD. It depends on [4Fe-4S] cluster as a cofactor.

The enzyme catalyses (2R,3S)-3-isopropylmalate = (2S)-2-isopropylmalate. It participates in amino-acid biosynthesis; L-leucine biosynthesis; L-leucine from 3-methyl-2-oxobutanoate: step 2/4. Its function is as follows. Catalyzes the isomerization between 2-isopropylmalate and 3-isopropylmalate, via the formation of 2-isopropylmaleate. In Ectopseudomonas mendocina (strain ymp) (Pseudomonas mendocina), this protein is 3-isopropylmalate dehydratase large subunit.